We begin with the raw amino-acid sequence, 72 residues long: UPF0154 protein YneF (72 aa).

A helical transmembrane segment spans residues 4-24 (WVGILVGVVALLIGVALGFFI).

Belongs to the UPF0154 family.

It is found in the membrane. The sequence is that of UPF0154 protein YneF (yneF) from Bacillus subtilis (strain 168).